The chain runs to 345 residues: Ribosomal RNA large subunit methyltransferase F (345 aa).

A compositionally biased stretch (polar residues) spans 1-14 (MTSKPMTRRPTANN). 2 disordered regions span residues 1-35 (MTSK…RNPH) and 225-258 (EANS…NAAQ). The segment covering 229 to 239 (RKQHNLQRHRG) has biased composition (basic residues). The span at 246 to 258 (ISRSSTKSGNAAQ) shows a compositional bias: polar residues.

Belongs to the methyltransferase superfamily. METTL16/RlmF family.

The protein localises to the cytoplasm. It carries out the reaction adenosine(1618) in 23S rRNA + S-adenosyl-L-methionine = N(6)-methyladenosine(1618) in 23S rRNA + S-adenosyl-L-homocysteine + H(+). Specifically methylates the adenine in position 1618 of 23S rRNA. This chain is Ribosomal RNA large subunit methyltransferase F, found in Psychrobacter arcticus (strain DSM 17307 / VKM B-2377 / 273-4).